Here is a 342-residue protein sequence, read N- to C-terminus: Glycerol-1-phosphate dehydrogenase [NAD(P)+] (342 aa).

Residues 84 to 88 (GRPID) and 106 to 109 (TSAS) contribute to the NAD(+) site. Asp111 is a substrate binding site. Residue Ser115 coordinates NAD(+). Asp160 lines the substrate pocket. Zn(2+) contacts are provided by Asp160 and His241. Residue His245 participates in substrate binding. His260 contacts Zn(2+).

It belongs to the glycerol-1-phosphate dehydrogenase family. In terms of assembly, homodimer. It depends on Zn(2+) as a cofactor.

The protein resides in the cytoplasm. It carries out the reaction sn-glycerol 1-phosphate + NAD(+) = dihydroxyacetone phosphate + NADH + H(+). The enzyme catalyses sn-glycerol 1-phosphate + NADP(+) = dihydroxyacetone phosphate + NADPH + H(+). It functions in the pathway membrane lipid metabolism; glycerophospholipid metabolism. Its function is as follows. Catalyzes the NAD(P)H-dependent reduction of dihydroxyacetonephosphate (DHAP or glycerone phosphate) to glycerol 1-phosphate (G1P). The G1P thus generated is used as the glycerophosphate backbone of phospholipids in the cellular membranes of Archaea. The polypeptide is Glycerol-1-phosphate dehydrogenase [NAD(P)+] (Pyrobaculum arsenaticum (strain DSM 13514 / JCM 11321 / PZ6)).